Reading from the N-terminus, the 208-residue chain is Uracil phosphoribosyltransferase (208 aa).

5-phospho-alpha-D-ribose 1-diphosphate is bound by residues R78, R103, and 130–138; that span reads DPMLATGGS. Uracil-binding positions include I193 and 198 to 200; that span reads GDA. D199 lines the 5-phospho-alpha-D-ribose 1-diphosphate pocket.

This sequence belongs to the UPRTase family. Mg(2+) is required as a cofactor.

The catalysed reaction is UMP + diphosphate = 5-phospho-alpha-D-ribose 1-diphosphate + uracil. It participates in pyrimidine metabolism; UMP biosynthesis via salvage pathway; UMP from uracil: step 1/1. Allosterically activated by GTP. In terms of biological role, catalyzes the conversion of uracil and 5-phospho-alpha-D-ribose 1-diphosphate (PRPP) to UMP and diphosphate. The chain is Uracil phosphoribosyltransferase from Proteus mirabilis (strain HI4320).